The following is a 589-amino-acid chain: Zinc finger protein 703 (589 aa).

The interval 102–315 (SQIGKPDPPP…GTGHIAPVSP (214 aa)) is disordered. Residues 113–122 (SKLGSLSSSS) are compositionally biased toward low complexity. The segment covering 137–148 (SGEHQNLDDKSS) has biased composition (basic and acidic residues). Positions 179–188 (NGSSSSVTCT) are enriched in polar residues. The span at 196-206 (SPRASSPQQTS) shows a compositional bias: low complexity. Positions 214–230 (QSQSPLSQKTAHLQTTH) are enriched in polar residues. Residues 237–250 (GSDPGNDSSSSGSD) are compositionally biased toward low complexity. Basic and acidic residues predominate over residues 251–262 (RNGKKDSDHNKS). The segment covering 272-299 (SSHARASVNSSSASSSSSPQPDSKTDSQ) has biased composition (low complexity). Residues 408–460 (VHDPSSALKSGFPLMYPTHHLHSLHPSSLSSSATSSLSHPLYTYGFMLPNETL) are required for interaction with Groucho and hdac2 plays an important role in repression of transcription. The C2H2-type zinc finger occupies 462-490 (HACNWVSVGGPCDKRFATSEELLAHLRTH). Residues 498-589 (GKLLSGYPSS…LGSASALGYQ (92 aa)) are required for self-association and nuclear localization.

Belongs to the Elbow/Noc family. In terms of assembly, self-associates. Interacts with nlz2. May interact with Groucho corepressor proteins.

The protein localises to the nucleus. Its subcellular location is the cytoplasm. Its function is as follows. Transcriptional corepressor which does not bind directly to DNA and may regulate transcription through recruitment of histone deacetylases to gene promoters. Required for segmental gene expression during hindbrain development. May regulate cell adhesion, migration and proliferation. The sequence is that of Zinc finger protein 703 (znf703) from Danio rerio (Zebrafish).